Reading from the N-terminus, the 501-residue chain is Maturase K (501 aa).

This sequence belongs to the intron maturase 2 family. MatK subfamily.

It localises to the plastid. The protein localises to the chloroplast. In terms of biological role, usually encoded in the trnK tRNA gene intron. Probably assists in splicing its own and other chloroplast group II introns. The chain is Maturase K from Amborella trichopoda.